The sequence spans 150 residues: MKVAILSGSVYGTAEEVARHAQKLLSAAGLEASHLPRASLDELKAFAPEAFLVVTSTTGMGELPDNLQPLYYAIRDQLPAWHGLPGGVIGLGDSSYGDTFCGGGEQVRELFGELGVREVLPMLRLDASETVTPETDAEPWLAEFAAALKG.

Residues 3-145 (VAILSGSVYG…DAEPWLAEFA (143 aa)) form the Flavodoxin-like domain.

This sequence belongs to the flavodoxin family. MioC subfamily. The cofactor is FMN.

Functionally, probable electron transporter. This is an uncharacterized protein from Pseudomonas aeruginosa (strain ATCC 15692 / DSM 22644 / CIP 104116 / JCM 14847 / LMG 12228 / 1C / PRS 101 / PAO1).